The primary structure comprises 1409 residues: DNA-directed RNA polymerase subunit beta' (1409 aa).

4 residues coordinate Zn(2+): Cys70, Cys72, Cys85, and Cys88. Mg(2+) contacts are provided by Asp458, Asp460, and Asp462. Residues Cys813, Cys887, Cys894, and Cys897 each contribute to the Zn(2+) site.

This sequence belongs to the RNA polymerase beta' chain family. The RNAP catalytic core consists of 2 alpha, 1 beta, 1 beta' and 1 omega subunit. When a sigma factor is associated with the core the holoenzyme is formed, which can initiate transcription. Mg(2+) serves as cofactor. The cofactor is Zn(2+).

The catalysed reaction is RNA(n) + a ribonucleoside 5'-triphosphate = RNA(n+1) + diphosphate. Functionally, DNA-dependent RNA polymerase catalyzes the transcription of DNA into RNA using the four ribonucleoside triphosphates as substrates. The protein is DNA-directed RNA polymerase subunit beta' of Delftia acidovorans (strain DSM 14801 / SPH-1).